A 103-amino-acid polypeptide reads, in one-letter code: MTEYTRKIKGGLSEARPATSEIQEIADKVRPLLEEKTNEKYEKFKAIEYKVQVVQGLNYFIKMNVGRGCYLHINVLSGISSENDLELTGYQTNKAKNDELTYF.

Positions glutamine 52–glycine 56 match the Secondary area of contact motif.

Belongs to the cystatin family.

The protein localises to the cytoplasm. In terms of biological role, this is an intracellular thiol proteinase inhibitor. The polypeptide is Stefin-2 (Stfa2) (Mus musculus (Mouse)).